A 29-amino-acid chain; its full sequence is Cyclotide mech-7 (29 aa).

The cyclopeptide (Gly-Asp) cross-link spans Gly-1–Asp-29. 3 disulfides stabilise this stretch: Cys-5–Cys-19, Cys-9–Cys-21, and Cys-14–Cys-26.

This is a cyclic peptide. In terms of processing, contains 3 disulfide bonds.

In terms of biological role, probably participates in a plant defense mechanism (Potential). Binds to and induces leakage in phospholipd membranes, particularly ones containing 1-palmitoyl-2-oleophosphatidylethanolamine (POPE). The protein is Cyclotide mech-7 of Melicytus chathamicus (Chatham Island mahoe).